The primary structure comprises 60 residues: Large ribosomal subunit protein uL30 (60 aa).

The protein belongs to the universal ribosomal protein uL30 family. Part of the 50S ribosomal subunit.

The protein is Large ribosomal subunit protein uL30 of Syntrophomonas wolfei subsp. wolfei (strain DSM 2245B / Goettingen).